A 67-amino-acid polypeptide reads, in one-letter code: Large ribosomal subunit protein uL29 (67 aa).

Belongs to the universal ribosomal protein uL29 family.

The sequence is that of Large ribosomal subunit protein uL29 from Moorella thermoacetica (strain ATCC 39073 / JCM 9320).